The chain runs to 310 residues: N-acetyl-gamma-glutamyl-phosphate reductase (310 aa).

Cys-117 is an active-site residue.

This sequence belongs to the NAGSA dehydrogenase family. Type 2 subfamily.

It is found in the cytoplasm. It carries out the reaction N-acetyl-L-glutamate 5-semialdehyde + phosphate + NADP(+) = N-acetyl-L-glutamyl 5-phosphate + NADPH + H(+). It functions in the pathway amino-acid biosynthesis; L-arginine biosynthesis; N(2)-acetyl-L-ornithine from L-glutamate: step 3/4. In terms of biological role, catalyzes the NADPH-dependent reduction of N-acetyl-5-glutamyl phosphate to yield N-acetyl-L-glutamate 5-semialdehyde. In Rhizobium meliloti (strain 1021) (Ensifer meliloti), this protein is N-acetyl-gamma-glutamyl-phosphate reductase.